Here is a 182-residue protein sequence, read N- to C-terminus: Small ribosomal subunit protein uS4c (182 aa).

Residues Met82–Asn143 form the S4 RNA-binding domain.

It belongs to the universal ribosomal protein uS4 family. In terms of assembly, part of the 30S ribosomal subunit. Contacts protein S5. The interaction surface between S4 and S5 is involved in control of translational fidelity.

Its subcellular location is the plastid. It localises to the chloroplast. In terms of biological role, one of the primary rRNA binding proteins, it binds directly to 16S rRNA where it nucleates assembly of the body of the 30S subunit. With S5 and S12 plays an important role in translational accuracy. This chain is Small ribosomal subunit protein uS4c (rps4), found in Isophysis tasmanica.